The chain runs to 394 residues: Bifunctional enzyme Fae/Hps (394 aa).

Residues 1-162 form a formaldehyde-activating enzyme region; sequence MEFRIGEALI…YEKDRSFHPF (162 aa). H18 serves as the catalytic Proton donor. Substrate contacts are provided by D20, L49, K67, T69, and Q84. Residues 163 to 394 form a 3-hexulose-6-phosphate synthase region; that stretch reads VGRKLTKLWD…TDQFRIMTDF (232 aa).

It in the N-terminal section; belongs to the formaldehyde-activating enzyme family. In the C-terminal section; belongs to the HPS/KGPDC family. HPS subfamily.

It carries out the reaction 5,6,7,8-tetrahydromethanopterin + formaldehyde = 5,10-methylenetetrahydromethanopterin + H2O. The catalysed reaction is D-ribulose 5-phosphate + formaldehyde = D-arabino-hex-3-ulose 6-phosphate. It functions in the pathway carbohydrate biosynthesis; D-ribose 5-phosphate biosynthesis. Its function is as follows. Catalyzes the condensation of formaldehyde with tetrahydromethanopterin (H(4)MPT) to 5,10-methylenetetrahydromethanopterin. In terms of biological role, catalyzes the reversible formation of ribulose-5-phosphate and formaldehyde from 3-hexulose-6-phosphate. This Archaeoglobus fulgidus (strain ATCC 49558 / DSM 4304 / JCM 9628 / NBRC 100126 / VC-16) protein is Bifunctional enzyme Fae/Hps.